The sequence spans 709 residues: Copper amine oxidase vicK1 (709 aa).

The signal sequence occupies residues 1–20 (MKLFLLFTLTLVNIFSVSLQ). Asp-365 serves as the catalytic Proton acceptor. A disulfide bridge connects residues Cys-383 and Cys-408. Tyr-448 serves as the catalytic Schiff-base intermediate with substrate; via topaquinone. Tyr-448 is modified (2',4',5'-topaquinone). Residues His-496 and His-498 each contribute to the Cu cation site. Ca(2+)-binding residues include Asp-505, Leu-506, Asp-507, Glu-548, Phe-641, Glu-645, Asp-651, and Leu-652. Cu cation is bound at residue His-662.

It belongs to the copper/topaquinone oxidase family. In terms of assembly, homodimer; disulfide-linked. Cu cation is required as a cofactor. Requires Ca(2+) as cofactor. The cofactor is L-topaquinone. Topaquinone (TPQ) is generated by copper-dependent autoxidation of a specific tyrosyl residue.

It functions in the pathway mycotoxin biosynthesis. Its function is as follows. Copper amine oxidase, part of the gene cluster that mediates the biosynthesis of the secondary metabolite victorin, the molecular basis for Victoria blight of oats. Within the pathway, vicK1 catalyzes the oxidative deamination of the N-terminal glycyl moiety of the hexapeptides in order to produce the active glyoxylate form victorins. The pathway starts with the processing of the precursor vicA1 by several endopeptidases including kexin proteases as well as the cluster-specific S28 family peptidases vicPa and vicPb to produce 7 identical copies of the hexapeptide Gly-Leu-Lys-Leu-Ala-Phe. After being excised from the precursor peptide, the core peptides are cyclized and modified post-translationally by enzymes encoded within the gene cluster. The ustYa family oxidase vicYb is required for the formation of the macrocycle in victorin and the copper amine oxidases (CAOs) vicK1 and vicK2 are responsible for converting victorin to the active form by oxidizing the N-terminal glycyl residue in the peptides to glyoxylate. Relaxed substrate specificity of enzymes in the victorin biosynthetic pathway results in a metabolic grid that produces a set of analogs including victorinines B, C, E or HV-toxin M. The sequence is that of Copper amine oxidase vicK1 from Bipolaris victoriae (strain FI3) (Victoria blight of oats agent).